We begin with the raw amino-acid sequence, 289 residues long: Shikimate dehydrogenase (NADP(+)) (289 aa).

Residues 22-24 (SRS) and Thr69 each bind shikimate. The Proton acceptor role is filled by Lys73. Glu85 is an NADP(+) binding site. The shikimate site is built by Asn94 and Asp109. Residues 134 to 138 (GAGGA), 158 to 163 (NRTLSR), and Ile226 each bind NADP(+). Tyr228 is a binding site for shikimate. Gly249 contributes to the NADP(+) binding site.

Belongs to the shikimate dehydrogenase family. As to quaternary structure, homodimer.

The catalysed reaction is shikimate + NADP(+) = 3-dehydroshikimate + NADPH + H(+). The protein operates within metabolic intermediate biosynthesis; chorismate biosynthesis; chorismate from D-erythrose 4-phosphate and phosphoenolpyruvate: step 4/7. Involved in the biosynthesis of the chorismate, which leads to the biosynthesis of aromatic amino acids. Catalyzes the reversible NADPH linked reduction of 3-dehydroshikimate (DHSA) to yield shikimate (SA). The chain is Shikimate dehydrogenase (NADP(+)) from Brucella abortus (strain S19).